The sequence spans 194 residues: Probable nicotinate-nucleotide adenylyltransferase (194 aa).

The protein belongs to the NadD family.

It carries out the reaction nicotinate beta-D-ribonucleotide + ATP + H(+) = deamido-NAD(+) + diphosphate. Its pathway is cofactor biosynthesis; NAD(+) biosynthesis; deamido-NAD(+) from nicotinate D-ribonucleotide: step 1/1. Catalyzes the reversible adenylation of nicotinate mononucleotide (NaMN) to nicotinic acid adenine dinucleotide (NaAD). The chain is Probable nicotinate-nucleotide adenylyltransferase from Chlorobium luteolum (strain DSM 273 / BCRC 81028 / 2530) (Pelodictyon luteolum).